The following is a 1230-amino-acid chain: ATP-dependent helicase/nuclease subunit A (1230 aa).

The UvrD-like helicase ATP-binding domain occupies 3–473; that stretch reads TKFTKNQQRA…IDLADNFRSQ (471 aa). 24 to 31 lines the ATP pocket; that stretch reads ASAGSGKT. The UvrD-like helicase C-terminal domain occupies 500-782; the sequence is EAKLVPKAAY…RIMTIHASKG (283 aa).

It belongs to the helicase family. AddA subfamily. Heterodimer of AddA and AddB/RexB. It depends on Mg(2+) as a cofactor.

It carries out the reaction Couples ATP hydrolysis with the unwinding of duplex DNA by translocating in the 3'-5' direction.. The catalysed reaction is ATP + H2O = ADP + phosphate + H(+). The heterodimer acts as both an ATP-dependent DNA helicase and an ATP-dependent, dual-direction single-stranded exonuclease. Recognizes the chi site generating a DNA molecule suitable for the initiation of homologous recombination. The AddA nuclease domain is required for chi fragment generation; this subunit has the helicase and 3' -&gt; 5' nuclease activities. This chain is ATP-dependent helicase/nuclease subunit A, found in Leuconostoc mesenteroides subsp. mesenteroides (strain ATCC 8293 / DSM 20343 / BCRC 11652 / CCM 1803 / JCM 6124 / NCDO 523 / NBRC 100496 / NCIMB 8023 / NCTC 12954 / NRRL B-1118 / 37Y).